Reading from the N-terminus, the 194-residue chain is tRNA(Phe) 7-((3-amino-3-carboxypropyl)-4-demethylwyosine(37)-N(4))-methyltransferase 1 (194 aa).

Belongs to the TYW3 family.

It carries out the reaction 4-demethyl-7-[(3S)-3-amino-3-carboxypropyl]wyosine(37) in tRNA(Phe) + S-adenosyl-L-methionine = 7-[(3S)-3-amino-3-carboxypropyl]wyosine(37) in tRNA(Phe) + S-adenosyl-L-homocysteine + H(+). In terms of biological role, S-adenosyl-L-methionine-dependent methyltransferase that acts as a component of the wyosine derivatives biosynthesis pathway. Probably methylates N-4 position of wybutosine-86 to produce wybutosine-72. This Pyrococcus abyssi (strain GE5 / Orsay) protein is tRNA(Phe) 7-((3-amino-3-carboxypropyl)-4-demethylwyosine(37)-N(4))-methyltransferase 1.